We begin with the raw amino-acid sequence, 209 residues long: E3 ubiquitin-protein ligase RNF138 (209 aa).

Residues 18 to 58 (CPVCQEVLKTPVRTAACQHVFCRKCFLTAMRESGIHCPLCR) form an RING-type zinc finger. Residues C86, C89, H101, and C105 each coordinate Zn(2+). The C2HC RNF-type zinc finger occupies 86-105 (CRCCSKKIKFYRMRHHYKSC). The segment at 125–154 (QDSVRSSNRSETSASDNTETYQEDTSSSGH) is disordered. Position 142 is a phosphothreonine (T142). The C2H2-type zinc finger occupies 157–180 (FKCPLCQESNFTRQRLLDHCNSNH). Positions 189–207 (LQLDEETQYQTAVEESFQV) constitute a UIM domain.

As to quaternary structure, interacts with NLK. Interacts with XRCC5/Ku80. Interacts with RBBP8/CtIP. Post-translationally, auto-ubiquitinated.

Its subcellular location is the chromosome. The enzyme catalyses S-ubiquitinyl-[E2 ubiquitin-conjugating enzyme]-L-cysteine + [acceptor protein]-L-lysine = [E2 ubiquitin-conjugating enzyme]-L-cysteine + N(6)-ubiquitinyl-[acceptor protein]-L-lysine.. It participates in protein modification; protein ubiquitination. Its function is as follows. E3 ubiquitin-protein ligase involved in DNA damage response by promoting DNA resection and homologous recombination. Recruited to sites of double-strand breaks following DNA damage and specifically promotes double-strand break repair via homologous recombination. Two different, non-exclusive, mechanisms have been proposed. According to a report, regulates the choice of double-strand break repair by favoring homologous recombination over non-homologous end joining (NHEJ): acts by mediating ubiquitination of XRCC5/Ku80, leading to remove the Ku complex from DNA breaks, thereby promoting homologous recombination. According to another report, cooperates with UBE2Ds E2 ubiquitin ligases (UBE2D1, UBE2D2, UBE2D3 or UBE2D4) to promote homologous recombination by mediating ubiquitination of RBBP8/CtIP. Together with NLK, involved in the ubiquitination and degradation of TCF/LEF. Also exhibits auto-ubiquitination activity in combination with UBE2K. May act as a negative regulator in the Wnt/beta-catenin-mediated signaling pathway. The polypeptide is E3 ubiquitin-protein ligase RNF138 (Rattus norvegicus (Rat)).